A 595-amino-acid chain; its full sequence is Outer dynein arm-docking complex subunit 3 (595 aa).

Positions 1–69 (MTSPLCRAAS…RGAGKPSVHS (69 aa)) are disordered. 2 coiled-coil regions span residues 94–327 (WNIK…REHL) and 385–473 (FAQL…ASKL).

In terms of assembly, component of the outer dynein arm-docking complex along with ODAD1, ODAD2, ODAD4 and CLXN. Interacts with ODAD1. Interacts with PIERCE1 and PIERCE2; the interactions link the outer dynein arms docking complex (ODA-DC) to the internal microtubule inner proteins (MIP) in cilium axoneme.

Its subcellular location is the cytoplasm. The protein resides in the cytoskeleton. It localises to the cilium basal body. It is found in the microtubule organizing center. The protein localises to the centrosome. Its subcellular location is the centriole. The protein resides in the cilium axoneme. Functionally, component of the outer dynein arm-docking complex (ODA-DC) that mediates outer dynein arms (ODA) binding onto the doublet microtubule. Involved in mediating assembly of both ODAs and their axonemal docking complex onto ciliary microtubules. The protein is Outer dynein arm-docking complex subunit 3 of Homo sapiens (Human).